The chain runs to 676 residues: RNA helicase NPH-II (676 aa).

In terms of domain architecture, Helicase ATP-binding spans 172–347 (FSAWISHRPV…VFLPNPAFIH (176 aa)). 185-192 (GGTGVGKT) is an ATP binding site. Positions 296–299 (DEVH) match the DEXH box motif. One can recognise a Helicase C-terminal domain in the interval 366–535 (NPSSRMAYIE…NYILYANKFN (170 aa)).

Belongs to the DEAD box helicase family. DEAH subfamily. Monomer.

It localises to the virion. The catalysed reaction is ATP + H2O = ADP + phosphate + H(+). Functionally, NTP-dependent helicase that catalyzes unidirectional unwinding of 3'tailed duplex RNAs and plays an important role during transcription of early mRNAs, presumably by preventing R-loop formation behind the elongating RNA polymerase. Might also play a role in the export of newly synthesized mRNA chains out of the core into the cytoplasm. Required for replication and propagation of viral particles. The sequence is that of RNA helicase NPH-II (OPG084) from Bos taurus (Bovine).